Reading from the N-terminus, the 86-residue chain is Cell division topological specificity factor (86 aa).

This sequence belongs to the MinE family.

Its function is as follows. Prevents the cell division inhibition by proteins MinC and MinD at internal division sites while permitting inhibition at polar sites. This ensures cell division at the proper site by restricting the formation of a division septum at the midpoint of the long axis of the cell. This Aliivibrio salmonicida (strain LFI1238) (Vibrio salmonicida (strain LFI1238)) protein is Cell division topological specificity factor.